A 304-amino-acid polypeptide reads, in one-letter code: HTH-type transcriptional regulator TtuA (304 aa).

Positions 1 to 58 (MELEQLKCFVAAAEELHFGRAAQKMGILPASLGRHLRLLEESLGTRLMSRTTRSVALT) constitute an HTH lysR-type domain. A DNA-binding region (H-T-H motif) is located at residues 18–37 (FGRAAQKMGILPASLGRHLR).

Belongs to the LysR transcriptional regulatory family.

In terms of biological role, transcriptional regulator of the ttuABCDE tartrate utilization operon. The chain is HTH-type transcriptional regulator TtuA (ttuA) from Agrobacterium vitis (Rhizobium vitis).